The chain runs to 708 residues: Kelch-like protein 11 (708 aa).

The signal sequence occupies residues 1–15 (MAAAAVAAAAAAAAA). A disordered region spans residues 47–70 (DFGPGPGISAMEASGGDPGPEAED). One can recognise a BTB domain in the interval 94 to 170 (CDITLCFGGA…MYTGRIRVST (77 aa)). Residues 205–307 (CVAIHSLAHM…KPTYLTRHVK (103 aa)) form the BACK domain. Kelch repeat units lie at residues 360 to 407 (VIMV…VTES), 408 to 453 (YVYV…EVKG), 455 to 501 (LYSI…AIED), 503 to 556 (FVYI…VVNS), and 610 to 661 (DVFI…HVRI). Phosphoserine is present on Ser465.

As to quaternary structure, component of a cullin-RING-based BCR (BTB-CUL3-RBX1) E3 ubiquitin-protein ligase complex. Homodimer. Interacts with CUL3.

In terms of biological role, component of a cullin-RING-based BCR (BTB-CUL3-RBX1) E3 ubiquitin-protein ligase complex that mediates the ubiquitination of target proteins, leading most often to their proteasomal degradation. In Homo sapiens (Human), this protein is Kelch-like protein 11 (KLHL11).